The following is a 282-amino-acid chain: 4-diphosphocytidyl-2-C-methyl-D-erythritol kinase (282 aa).

The active site involves Lys-12. Residue 95 to 105 (PMGGGIGGGSS) coordinates ATP. Asp-137 is an active-site residue.

This sequence belongs to the GHMP kinase family. IspE subfamily.

The catalysed reaction is 4-CDP-2-C-methyl-D-erythritol + ATP = 4-CDP-2-C-methyl-D-erythritol 2-phosphate + ADP + H(+). It participates in isoprenoid biosynthesis; isopentenyl diphosphate biosynthesis via DXP pathway; isopentenyl diphosphate from 1-deoxy-D-xylulose 5-phosphate: step 3/6. In terms of biological role, catalyzes the phosphorylation of the position 2 hydroxy group of 4-diphosphocytidyl-2C-methyl-D-erythritol. This Pseudomonas aeruginosa (strain LESB58) protein is 4-diphosphocytidyl-2-C-methyl-D-erythritol kinase.